Reading from the N-terminus, the 158-residue chain is Cysteine proteinase inhibitor 4 (158 aa).

Positions 1–24 (MAARCPVGVASVLLLIVLVTVASA) are cleaved as a signal peptide. The tract at residues 26 to 51 (SGARSGGGGGGGIRELRGGGAGRRVG) is disordered. Residues 29-49 (RSGGGGGGGIRELRGGGAGRR) are compositionally biased toward gly residues. The 66-residue stretch at 51–116 (GGRTEVRDVE…KYYLRVAAAE (66 aa)) folds into the Cystatin domain. A Secondary area of contact motif is present at residues 101 to 105 (QVVSG).

This sequence belongs to the cystatin family. Phytocystatin subfamily.

It localises to the secreted. Functionally, specific inhibitor of cysteine proteinases. Probably involved in the regulation of endogenous processes and in defense against pests and pathogens. The protein is Cysteine proteinase inhibitor 4 of Oryza sativa subsp. japonica (Rice).